We begin with the raw amino-acid sequence, 1106 residues long: Protein transport protein Sec31A (1106 aa).

WD repeat units follow at residues K4 to E47, R68 to K111, K120 to T160, Q166 to K206, D209 to R254, N258 to E298, and T301 to R342. The interval P161–K471 is interaction with SEC13. One copy of the WD 8; interaction with SEC13 repeat lies at S397–S430. S527 and S532 each carry phosphoserine. Residue K647 forms a Glycyl lysine isopeptide (Lys-Gly) (interchain with G-Cter in ubiquitin) linkage. S799 is subject to Phosphoserine. Residues P800–P999 form an interaction with PDCD6 region. The ALG-2-binding site motif-2 (ABS-2) motif lies at G842 to N848. The interval T859–N980 is disordered. Residues P917–P939 show a composition bias toward polar residues. T1047 bears the Phosphothreonine mark. At S1049 the chain carries Phosphoserine. Residue K1103 forms a Glycyl lysine isopeptide (Lys-Gly) (interchain with G-Cter in ubiquitin) linkage.

Belongs to the WD repeat SEC31 family. COPII is composed of at least 5 proteins: the SEC23/24 complex, the SEC13/31 complex and SAR1. SEC13 and SEC31 make a 2:2 tetramer that forms the edge element of the COPII outer coat. The tetramer self-assembles in multiple copies to form the complete polyhedral cage. Interacts (via WD 8) with SEC13. Interacts with PDCD6; interaction takes place in response to cytosolic calcium increase and leads to bridge together the BCR(KLHL12) complex and SEC31A, leading to monoubiquitination. Interacts with KLHL12. Post-translationally, monoubiquitinated by the BCR(KLHL12) E3 ubiquitin ligase complex, leading to regulate the size of COPII coats.

The protein localises to the cytoplasm. It is found in the cytoplasmic vesicle. It localises to the COPII-coated vesicle membrane. The protein resides in the endoplasmic reticulum membrane. Component of the coat protein complex II (COPII) which promotes the formation of transport vesicles from the endoplasmic reticulum (ER). The coat has two main functions, the physical deformation of the endoplasmic reticulum membrane into vesicles and the selection of cargo molecules. The polypeptide is Protein transport protein Sec31A (SEC31A) (Pongo abelii (Sumatran orangutan)).